Reading from the N-terminus, the 160-residue chain is CST complex subunit STN1 (160 aa).

Positions 41 to 133 (VEIVGTIVSR…QITANVAVAE (93 aa)) form a DNA-binding region, OB.

Belongs to the STN1 family. Component of the CST complex, composed of CTC1, TEN1 and STN1. Interacts with CTC1. Interacts with TEN1. Interacts with POT1A. In vitro interaction with TEN1 and POT1A is mutually exclusive, indicating that POT1A and TEN1 may compete for the same binding site. Widely expressed.

It localises to the nucleus. The protein resides in the chromosome. It is found in the telomere. Component of the CST complex, a complex that binds to single-stranded DNA and is required to protect telomeres from DNA degradation. The CST complex binds single-stranded DNA with high affinity in a sequence-independent manner, while isolated subunits bind DNA with low affinity by themselves. Associates with enzymatically active telomerase. Plays a genomewide role in DNA replication and facilitates re-replication at non-telomeric loci. This Arabidopsis thaliana (Mouse-ear cress) protein is CST complex subunit STN1.